We begin with the raw amino-acid sequence, 186 residues long: MRRIGVIALQGDVSEHISAIEAAGGQAVPVRRAGIIPTCSGIVIPGGESTTISRQLERTGIAAEIKQAAANGTPVLATCAGLVLAAKEIDAGDVKPLGLIDISVGRNAFGPQRESFEAEINVEGFDRPYRAVFIRAPVVLRCGEGVEKLARFGGRTVAVRQGNVIGLAFHPELTGDLRFHKMLLEA.

47–49 (GES) is a binding site for L-glutamine. Cys-79 acts as the Nucleophile in catalysis. L-glutamine-binding positions include Arg-106 and 134 to 135 (IR). Residues His-170 and Glu-172 each act as charge relay system in the active site.

Belongs to the glutaminase PdxT/SNO family. In terms of assembly, in the presence of PdxS, forms a dodecamer of heterodimers. Only shows activity in the heterodimer.

The catalysed reaction is aldehydo-D-ribose 5-phosphate + D-glyceraldehyde 3-phosphate + L-glutamine = pyridoxal 5'-phosphate + L-glutamate + phosphate + 3 H2O + H(+). It carries out the reaction L-glutamine + H2O = L-glutamate + NH4(+). It functions in the pathway cofactor biosynthesis; pyridoxal 5'-phosphate biosynthesis. Its function is as follows. Catalyzes the hydrolysis of glutamine to glutamate and ammonia as part of the biosynthesis of pyridoxal 5'-phosphate. The resulting ammonia molecule is channeled to the active site of PdxS. The chain is Pyridoxal 5'-phosphate synthase subunit PdxT from Methanothrix thermoacetophila (strain DSM 6194 / JCM 14653 / NBRC 101360 / PT) (Methanosaeta thermophila).